Reading from the N-terminus, the 225-residue chain is Histone H1.11L (225 aa).

2 stretches are compositionally biased toward low complexity: residues Met1 to Ala23 and Ala31 to Pro43. Disordered regions lie at residues Met1–Thr46 and Ser94–Lys225. An N-acetylserine modification is found at Ser2. One can recognise an H15 domain in the interval Ala41 to Lys114. Basic residues-rich tracts occupy residues Ala123–Ala138, Lys146–Lys163, Lys171–Val189, and Lys198–Lys225.

The protein belongs to the histone H1/H5 family.

It is found in the nucleus. Its subcellular location is the chromosome. Its function is as follows. Histones H1 are necessary for the condensation of nucleosome chains into higher-order structures. The protein is Histone H1.11L of Gallus gallus (Chicken).